We begin with the raw amino-acid sequence, 831 residues long: Prolactin receptor (831 aa).

Residues 1–23 (MKQNLISSVQIILLLPLTTVGLT) form the signal peptide. Residues 24–438 (SQSFPGKPKI…EIPNDFRVKD (415 aa)) are Extracellular-facing. 4 consecutive Fibronectin type-III domains span residues 30-128 (KPKI…VQPG), 129-232 (SPVN…SPPE), 233-331 (KPTI…VQPD), and 332-433 (PPAN…IPND). A disulfide bridge links cysteine 36 with cysteine 46. Residue asparagine 59 is glycosylated (N-linked (GlcNAc...) asparagine). Cysteine 75 and cysteine 86 are oxidised to a cystine. N-linked (GlcNAc...) asparagine glycosylation is found at asparagine 91, asparagine 100, asparagine 112, asparagine 132, asparagine 262, asparagine 303, asparagine 315, and asparagine 335. Aspartate 414 and histidine 416 together coordinate Zn(2+). Residues 419-423 (WSEWS) carry the WSXWS motif motif. The helical transmembrane segment at 439–459 (MIVWIVLGVLSSLICLIMSWT) threads the bilayer. Topologically, residues 460–831 (MVLKGYRMIT…DPSSFMPSFK (372 aa)) are cytoplasmic. The Box 1 motif signature appears at 471–479 (ILPPVPGPK). 2 disordered regions span residues 527–563 (HQLMPSHDSGRPSKNAKITLKETDRDSGRGSCDSPSL) and 776–831 (HTPT…PSFK). Basic and acidic residues predominate over residues 545-554 (TLKETDRDSG). Over residues 777–803 (TPTSQEEPAKETSQNPQQGQVETNMSY) the composition is skewed to polar residues.

Belongs to the type I cytokine receptor family. Type 1 subfamily.

The protein resides in the membrane. Its function is as follows. This is a receptor for the anterior pituitary hormone prolactin. The protein is Prolactin receptor (PRLR) of Meleagris gallopavo (Wild turkey).